We begin with the raw amino-acid sequence, 193 residues long: uncharacterized protein (193 aa).

This is an uncharacterized protein from Archaeoglobus fulgidus (strain ATCC 49558 / DSM 4304 / JCM 9628 / NBRC 100126 / VC-16).